We begin with the raw amino-acid sequence, 736 residues long: MPVPGWGSYPPFDRDETSAITYQSKLRGSVTVYDPYSALEVPSNDSEETKAFILEQNKFSRAYLDANPDRQTWLETLKKSWHYRRFTTPTRESDDHFYFLYNDGLLAQSPVYRVKVDDVDSILTESGPGGELFFDPNLLSLDGVATLTGTAMSPCGKYWAYAISEHGNDWMTIYVRKTSSPHHPSQERGKDPGRMDDVIQHCRIFFVSWTDDSKGFFYSKWPPDENQGNGNAPGVDCKIYYHRIAVFLSEDPEHPGWFWNVEVSPSGQYALLLGTRDASLNQLVKLADLHTSDIETGIQWTTLHDSWQARFSIIGNDNSLIYFRTNLEAENHRVAAFNVHHPQAGFTTLVPGSLDSVLLDAKLYGINKLVLVYQHLAKHEIYLHDIETGRRLRQIFTDLAGKMTISGRRADHEMFVLYSDFISPGTLYRQLLNRYKFDKDTDKGLLFRTIKVDALNLDDFVTESEFYPSKDGTLVHMFITHPKDVFTDGTAPVLMYGYGGFGAPMFPNFSISNLLFCNIYRGIGGSEFGESWHREGMLEKKQNVFDDFRAAAEWLVTNKYARKGGVAIRGGSNGGIMTTACSNQAPELYGCVITIAGLQDMLRYTKFTFGDLLRSEYGNPENPEDFDYIYKYSPYHNIPLKEVTMPPMLFLQSDYDDRVSPLHTYKHVAALQHRFPKGPNPIILRIDLDSGHYAGKSTMRLIEETADEYSFIGKSLGLTMHLPNNSNYSNRWCVLG.

Residues Ser-572, Asp-656, and His-692 each act as charge relay system in the active site.

The protein belongs to the peptidase S9A family. In terms of assembly, monomer.

It carries out the reaction Hydrolysis of Pro-|-Xaa &gt;&gt; Ala-|-Xaa in oligopeptides.. It functions in the pathway mycotoxin biosynthesis. Prolyl oligopeptidase; part of the gene cluster that mediates the biosynthesis of dendrothelin A, a highly methylated cyclic dodecapeptide showing slight nematodicidal activity. Excises and catalyzes the macrocyclization of the methylated core peptide of dbiMA to yield dendrothelin A. DbiP works in a two-step fashion with an initial cleavage at the N-terminus, followed by a second cleavage at the C-terminus of the core peptide. According to this mechanism, the free N-terminus of the core peptide, generated by the first cleavage, attacks the covalent intermediate of the second cleavage, which results in macrocyclization of the core peptide. The polypeptide is Prolyl oligopeptidase dbiP (Dendrothele bispora (strain CBS 962.96)).